Here is a 522-residue protein sequence, read N- to C-terminus: Putative cysteine ligase BshC (522 aa).

Positions 436-469 (SWAQAEKAKALKQLEDIEKKLRKAEERKHDDVIK) form a coiled coil.

The protein belongs to the BshC family.

This is Putative cysteine ligase BshC from Cytophaga hutchinsonii (strain ATCC 33406 / DSM 1761 / CIP 103989 / NBRC 15051 / NCIMB 9469 / D465).